We begin with the raw amino-acid sequence, 335 residues long: Glyceraldehyde-3-phosphate dehydrogenase (335 aa).

NAD(+) is bound by residues 12-13, Asp-34, Arg-78, and Ser-120; that span reads RI. D-glyceraldehyde 3-phosphate contacts are provided by residues 151 to 153 and Thr-182; that span reads SCT. Catalysis depends on Cys-152, which acts as the Nucleophile. Residue Asn-183 coordinates NAD(+). Residues Arg-197, 210–211, and Arg-233 contribute to the D-glyceraldehyde 3-phosphate site; that span reads TG. Asn-315 lines the NAD(+) pocket.

Belongs to the glyceraldehyde-3-phosphate dehydrogenase family. In terms of assembly, homotetramer.

The protein resides in the cytoplasm. It carries out the reaction D-glyceraldehyde 3-phosphate + phosphate + NAD(+) = (2R)-3-phospho-glyceroyl phosphate + NADH + H(+). The protein operates within carbohydrate degradation; glycolysis; pyruvate from D-glyceraldehyde 3-phosphate: step 1/5. In terms of biological role, catalyzes the oxidative phosphorylation of glyceraldehyde 3-phosphate (G3P) to 1,3-bisphosphoglycerate (BPG) using the cofactor NAD. The first reaction step involves the formation of a hemiacetal intermediate between G3P and a cysteine residue, and this hemiacetal intermediate is then oxidized to a thioester, with concomitant reduction of NAD to NADH. The reduced NADH is then exchanged with the second NAD, and the thioester is attacked by a nucleophilic inorganic phosphate to produce BPG. The sequence is that of Glyceraldehyde-3-phosphate dehydrogenase (gap) from Geobacillus stearothermophilus (Bacillus stearothermophilus).